Here is a 650-residue protein sequence, read N- to C-terminus: 1-deoxy-D-xylulose-5-phosphate synthase (650 aa).

Thiamine diphosphate contacts are provided by residues H87 and 128–130; that span reads GHS. Residue D159 participates in Mg(2+) binding. Residues 160–161, N188, Y299, and E383 each bind thiamine diphosphate; that span reads GS. N188 is a Mg(2+) binding site.

Belongs to the transketolase family. DXPS subfamily. In terms of assembly, homodimer. Mg(2+) serves as cofactor. It depends on thiamine diphosphate as a cofactor.

The catalysed reaction is D-glyceraldehyde 3-phosphate + pyruvate + H(+) = 1-deoxy-D-xylulose 5-phosphate + CO2. The protein operates within metabolic intermediate biosynthesis; 1-deoxy-D-xylulose 5-phosphate biosynthesis; 1-deoxy-D-xylulose 5-phosphate from D-glyceraldehyde 3-phosphate and pyruvate: step 1/1. Functionally, catalyzes the acyloin condensation reaction between C atoms 2 and 3 of pyruvate and glyceraldehyde 3-phosphate to yield 1-deoxy-D-xylulose-5-phosphate (DXP). This is 1-deoxy-D-xylulose-5-phosphate synthase from Syntrophus aciditrophicus (strain SB).